The following is a 170-amino-acid chain: 3-hydroxydecanoyl-[acyl-carrier-protein] dehydratase (170 aa).

His69 is a catalytic residue.

The protein belongs to the thioester dehydratase family. FabA subfamily. As to quaternary structure, homodimer.

It is found in the cytoplasm. The enzyme catalyses a (3R)-hydroxyacyl-[ACP] = a (2E)-enoyl-[ACP] + H2O. It carries out the reaction (3R)-hydroxydecanoyl-[ACP] = (2E)-decenoyl-[ACP] + H2O. It catalyses the reaction (2E)-decenoyl-[ACP] = (3Z)-decenoyl-[ACP]. The protein operates within lipid metabolism; fatty acid biosynthesis. Necessary for the introduction of cis unsaturation into fatty acids. Catalyzes the dehydration of (3R)-3-hydroxydecanoyl-ACP to E-(2)-decenoyl-ACP and then its isomerization to Z-(3)-decenoyl-ACP. Can catalyze the dehydratase reaction for beta-hydroxyacyl-ACPs with saturated chain lengths up to 16:0, being most active on intermediate chain length. The sequence is that of 3-hydroxydecanoyl-[acyl-carrier-protein] dehydratase from Caulobacter vibrioides (strain ATCC 19089 / CIP 103742 / CB 15) (Caulobacter crescentus).